Here is a 104-residue protein sequence, read N- to C-terminus: MSPRKTYILKLYVAGNTPNSMRALKTLRNILETEFRGVYALKVIDVLKNPQLAEEDKILATPTLSKILPPPVRRIIGDLSDRERVLIGLDLLYDELADNAFSSG.

This sequence belongs to the KaiB family. As to quaternary structure, the KaiABC complex composition changes during the circadian cycle to control KaiC phosphorylation. Complexes KaiC(6), KaiA(2-4):KaiC(6), KaiB(6):KaiC(6) and KaiC(6):KaiB(6):KaiA(12) are among the most important forms, many form cooperatively. Undergoes a major conformational rearrangment; in the free state forms homotetramers as a dimer of dimers. When bound to the CI domain of KaiC switches to a monomeric thioredoxin-fold (KaiB(fs)). KaiB(fs) binds CikA, leading it to dephosphorylate phospho-RpaA.

In terms of biological role, key component of the KaiABC oscillator complex, which constitutes the main circadian regulator in cyanobacteria. Complex composition changes during the circadian cycle to control KaiC phosphorylation. KaiA stimulates KaiC autophosphorylation, while KaiB sequesters KaiA, leading to KaiC autodephosphorylation. Phospho-Ser-431 KaiC accumulation triggers binding of KaiB to form the KaiB(6):KaiC(6) complex, leading to changes in output regulators CikA and SasA. KaiB switches to a thioredoxin-like fold (KaiB(fs)) when bound to KaiC. KaiB(6):KaiC(6) formation exposes a site for KaiA binding that sequesters KaiA from KaiC, making the KaiC(6):KaiB(6):KaiA(12) complex that results in KaiC autodephosphorylation. A metamorphic protein which reversibly switches between an inactive tetrameric fold and a rare, thioredoxin-like monomeric fold (KaiB(fs)). KaiB(fs) binds phospho-KaiC, KaiA and CikA. KaiA and CikA compete for binding to KaiB(fs), and KaiB(fs) and SasA compete for binding to KaiC, thus the clock oscillator and output signal pathway are tightly coupled. The polypeptide is Circadian clock oscillator protein KaiB (Parasynechococcus marenigrum (strain WH8102)).